Consider the following 1171-residue polypeptide: Pesticidal crystal protein Cry1Ea (1171 aa).

Residues 1094 to 1124 are disordered; sequence ESNSSVHASVYEEKSYTDRRRENPCESNRGY. Basic and acidic residues predominate over residues 1103 to 1117; the sequence is VYEEKSYTDRRRENP.

It belongs to the delta endotoxin family.

Its function is as follows. Promotes colloidosmotic lysis by binding to the midgut epithelial cells of many lepidopteran larvae including Spodoptera species. The sequence is that of Pesticidal crystal protein Cry1Ea (cry1Ea) from Bacillus thuringiensis subsp. kenyae.